The sequence spans 132 residues: Small ribosomal subunit protein bS16 (132 aa).

Over residues 82-107 the composition is skewed to basic and acidic residues; it reads DSKVQSKKEHNANKVKKEVKKPEAKK. The interval 82–132 is disordered; it reads DSKVQSKKEHNANKVKKEVKKPEAKKAAASKPASKPSASKSASQKKTVSKK. A compositionally biased stretch (low complexity) spans 108–132; it reads AAASKPASKPSASKSASQKKTVSKK.

The protein belongs to the bacterial ribosomal protein bS16 family.

This chain is Small ribosomal subunit protein bS16, found in Malacoplasma penetrans (strain HF-2) (Mycoplasma penetrans).